Consider the following 355-residue polypeptide: MGQQVQHESRINVGEATHVSKAEMGANTMFATSRLNSNNKVGPELAYLSGVASSASDSSTAAPSPCYLCHKPAALHVFGLAGRYVFGSVKREAYLSQEGPRSGRTPNRIAESLPVRVVNDFGLRLRVVTNQGPIKPRPPRPIDAIVFASIETRNRLRGFDRSFCCSAPPETYVFLPRARETIVLRANIIKMSSEQQASAGQPVLCASGCGFYGNPATLDMCSVCYRQHCLLNGATMATGPSSSVAAASAATVATGAVTSDSCSVPSAEVNGAAFSSKNNPEPATVVEKKAPANRCASCKKKVGLLGFACRCGATYCGTHRYPEKHACGFDFKGASRDAIARANPLIKGEKLTNKI.

An A20-type zinc finger spans residues 199–233 (AGQPVLCASGCGFYGNPATLDMCSVCYRQHCLLNG). 12 residues coordinate Zn(2+): cysteine 205, cysteine 209, cysteine 221, cysteine 224, cysteine 295, cysteine 298, cysteine 309, cysteine 311, cysteine 316, histidine 319, histidine 325, and cysteine 327. An AN1-type zinc finger spans residues 289–335 (KAPANRCASCKKKVGLLGFACRCGATYCGTHRYPEKHACGFDFKGAS).

In terms of biological role, may be involved in environmental stress response. The chain is Zinc finger A20 and AN1 domain-containing stress-associated protein 3 (SAP3) from Oryza sativa subsp. japonica (Rice).